The primary structure comprises 302 residues: GTP cyclohydrolase FolE2 (302 aa).

This sequence belongs to the GTP cyclohydrolase IV family.

It carries out the reaction GTP + H2O = 7,8-dihydroneopterin 3'-triphosphate + formate + H(+). It functions in the pathway cofactor biosynthesis; 7,8-dihydroneopterin triphosphate biosynthesis; 7,8-dihydroneopterin triphosphate from GTP: step 1/1. Its function is as follows. Converts GTP to 7,8-dihydroneopterin triphosphate. The chain is GTP cyclohydrolase FolE2 from Pseudoalteromonas translucida (strain TAC 125).